Here is a 249-residue protein sequence, read N- to C-terminus: MDGEEDSEWMMMDVGGKGGKGGGGGGAADRKKRFSEEQIKSLESMFATQTKLEPRQKLQLARELGLQPRQVAIWFQNKRARWKSKQLEREYSALRDDYDALLCSYESLKKEKLALIKQLEKLAEMLQEPRGKYGDNAGDDARSGGVAGMKKEEFVGAGGAATLYSSAEGGGTTTTTTAKLMPHFGSDDVDAGLFLRPSSQHHPPPPHAGAGFTSSEPAADHQSFNFHSSWPSSTEQTCSSTPWWEFESE.

Residues 1–32 (MDGEEDSEWMMMDVGGKGGKGGGGGGAADRKK) form a disordered region. The segment covering 15-27 (GGKGGKGGGGGGA) has biased composition (gly residues). The segment at residues 27-86 (AADRKKRFSEEQIKSLESMFATQTKLEPRQKLQLARELGLQPRQVAIWFQNKRARWKSKQ) is a DNA-binding region (homeobox). A leucine-zipper region spans residues 85 to 129 (KQLEREYSALRDDYDALLCSYESLKKEKLALIKQLEKLAEMLQEP). The segment at 194-249 (FLRPSSQHHPPPPHAGAGFTSSEPAADHQSFNFHSSWPSSTEQTCSSTPWWEFESE) is disordered. Residues 212 to 242 (FTSSEPAADHQSFNFHSSWPSSTEQTCSSTP) are compositionally biased toward polar residues.

Belongs to the HD-ZIP homeobox family. Class I subfamily. Expressed in seedlings, roots, leaves, nodes, internodes, flowers and embryo.

The protein resides in the nucleus. In terms of biological role, probable transcription factor that binds to the DNA sequence 5'-CAAT[AT]ATTG-3'. The chain is Homeobox-leucine zipper protein HOX6 (HOX6) from Oryza sativa subsp. indica (Rice).